We begin with the raw amino-acid sequence, 129 residues long: Fluoride-specific ion channel FluC 2 (129 aa).

The next 4 membrane-spanning stretches (helical) occupy residues 3–23, 32–52, 59–79, and 90–110; these read FLYV…MNLW, ATLA…PFLA, LVLL…FSAF, and GEVV…LVMV. The Na(+) site is built by Gly71 and Thr74.

It belongs to the fluoride channel Fluc/FEX (TC 1.A.43) family.

It is found in the cell membrane. The enzyme catalyses fluoride(in) = fluoride(out). Its activity is regulated as follows. Na(+) is not transported, but it plays an essential structural role and its presence is essential for fluoride channel function. Functionally, fluoride-specific ion channel. Important for reducing fluoride concentration in the cell, thus reducing its toxicity. This chain is Fluoride-specific ion channel FluC 2, found in Listeria innocua serovar 6a (strain ATCC BAA-680 / CLIP 11262).